Here is a 210-residue protein sequence, read N- to C-terminus: Ribosomal RNA large subunit methyltransferase E (210 aa).

S-adenosyl-L-methionine is bound by residues G61, W63, D81, D97, and D122. The active-site Proton acceptor is K162.

This sequence belongs to the class I-like SAM-binding methyltransferase superfamily. RNA methyltransferase RlmE family.

The protein resides in the cytoplasm. The enzyme catalyses uridine(2552) in 23S rRNA + S-adenosyl-L-methionine = 2'-O-methyluridine(2552) in 23S rRNA + S-adenosyl-L-homocysteine + H(+). Its function is as follows. Specifically methylates the uridine in position 2552 of 23S rRNA at the 2'-O position of the ribose in the fully assembled 50S ribosomal subunit. This chain is Ribosomal RNA large subunit methyltransferase E, found in Xanthomonas campestris pv. campestris (strain 8004).